The primary structure comprises 647 residues: Threonine--tRNA ligase (647 aa).

A TGS domain is found at 1–61 (MINITFPDGA…TEDGSIEIVT (61 aa)). The interval 242 to 540 (DHRKLGKELD…LIENYKGAFP (299 aa)) is catalytic. Residues Cys336, His387, and His517 each contribute to the Zn(2+) site.

The protein belongs to the class-II aminoacyl-tRNA synthetase family. Homodimer. Zn(2+) is required as a cofactor.

It is found in the cytoplasm. The enzyme catalyses tRNA(Thr) + L-threonine + ATP = L-threonyl-tRNA(Thr) + AMP + diphosphate + H(+). Its function is as follows. Catalyzes the attachment of threonine to tRNA(Thr) in a two-step reaction: L-threonine is first activated by ATP to form Thr-AMP and then transferred to the acceptor end of tRNA(Thr). Also edits incorrectly charged L-seryl-tRNA(Thr). The sequence is that of Threonine--tRNA ligase from Streptococcus pneumoniae (strain ATCC 700669 / Spain 23F-1).